The following is a 420-amino-acid chain: Subtilisin-like protease 7 (420 aa).

The N-terminal stretch at 1–20 (MGFITKAIPLALAAASVING) is a signal peptide. The propeptide occupies 21 to 119 (AEIMETRAGV…IERDARVQIN (99 aa)). The 83-residue stretch at 36-118 (KYIVVMNDGM…YIERDARVQI (83 aa)) folds into the Inhibitor I9 domain. In terms of domain architecture, Peptidase S8 spans 129–413 (SWGLARVGSK…SFPLNIYEEQ (285 aa)). Residues Asp161 and His192 each act as charge relay system in the active site. Residues Asn222 and Asn252 are each glycosylated (N-linked (GlcNAc...) asparagine). Ser346 acts as the Charge relay system in catalysis. The N-linked (GlcNAc...) asparagine glycan is linked to Asn396.

The protein belongs to the peptidase S8 family.

The protein localises to the secreted. Secreted subtilisin-like serine protease with keratinolytic activity that contributes to pathogenicity. The chain is Subtilisin-like protease 7 (SUB7) from Arthroderma benhamiae (strain ATCC MYA-4681 / CBS 112371) (Trichophyton mentagrophytes).